The chain runs to 292 residues: Glycine--tRNA ligase alpha subunit (292 aa).

This sequence belongs to the class-II aminoacyl-tRNA synthetase family. In terms of assembly, tetramer of two alpha and two beta subunits.

Its subcellular location is the cytoplasm. It catalyses the reaction tRNA(Gly) + glycine + ATP = glycyl-tRNA(Gly) + AMP + diphosphate. The chain is Glycine--tRNA ligase alpha subunit from Desulfovibrio desulfuricans (strain ATCC 27774 / DSM 6949 / MB).